A 155-amino-acid polypeptide reads, in one-letter code: Cyanate hydratase (155 aa).

Active-site residues include Arg95, Glu98, and Ser121.

The protein belongs to the cyanase family.

It catalyses the reaction cyanate + hydrogencarbonate + 3 H(+) = NH4(+) + 2 CO2. Its function is as follows. Catalyzes the reaction of cyanate with bicarbonate to produce ammonia and carbon dioxide. This Pseudomonas savastanoi pv. phaseolicola (strain 1448A / Race 6) (Pseudomonas syringae pv. phaseolicola (strain 1448A / Race 6)) protein is Cyanate hydratase.